The sequence spans 435 residues: MASEKHFKYVILGGGVAAGYAAREFAKQGVKPGELAIISKEAVAPYERPALSKGYLFPQNAARLPGFHVCVGSGGERLLPEWYSEKGIELILSTEIVKADLASKTLTSAVGATFTYEILIIATGSSVIKLSDFGTQGADSNNILYLREVDDADKLVAAIQAKKGGKAVIVGGGYIGLELSAALKINDFDVTMVFPEPWCMPRLFTADIAAFYESYYTNKGVKIVKGTVAVGFDADANGDVTAVNLKNGSVLEADIVVVGVGGRPLTTLFKGQVAEEKGGIKTDAFFETSVPGVYAVGDVATFPMKMYNELRRVEHVDHARKSAEQAVKAIKGKESGESVVEYDYLPYFYSRSFDLGWQFYGDNVGDTILFGDSDPTSAKPKFGSYWIKDGKVLGAFLEGGSPDENKAIAKVAKTQPPVANIEELKKEGLQFASKI.

Residues 14 to 17, glutamate 41, arginine 48, lysine 53, isoleucine 96, and 147 to 148 each bind FAD; these read GGVA and RE. NAD(+) contacts are provided by residues 172 to 178, glutamate 196, arginine 202, and glycine 261; that span reads GGYIGLE. NADP(+) is bound at residue 174–178; that stretch reads YIGLE. Positions 202 and 261 each coordinate NADP(+). Residue aspartate 298 participates in FAD binding. 314–315 contributes to the NAD(+) binding site; that stretch reads EH. 314-315 contributes to the NADP(+) binding site; it reads EH. Residue valine 316 participates in FAD binding. Residue arginine 320 coordinates L-ascorbate. Position 349 (tyrosine 349) interacts with FAD. Tyrosine 349 contributes to the NAD(+) binding site. Tyrosine 349 is a binding site for NADP(+). Arginine 351 serves as a coordination point for L-ascorbate.

Belongs to the FAD-dependent oxidoreductase family. FAD serves as cofactor.

Its subcellular location is the cytoplasm. The enzyme catalyses 2 monodehydro-L-ascorbate radical + NADH + H(+) = 2 L-ascorbate + NAD(+). Functionally, catalyzes the conversion of monodehydroascorbate to ascorbate, oxidizing NADH in the process. Ascorbate is a major antioxidant against reactive oxygen species (ROS) and nitric oxide (NO). Can use NADPH as electron donor, but possesses lower activity compared to NADH as electron donor. This is Monodehydroascorbate reductase 3, cytosolic from Oryza sativa subsp. japonica (Rice).